Consider the following 849-residue polypeptide: Villin-1 (849 aa).

5 Gelsolin-like repeats span residues 30 to 107, 147 to 213, 262 to 335, 405 to 475, and 527 to 566; these read IEKS…DKFL, RVTE…EDGK, VPVE…TVEF, QEQL…PEMF, and AIQV…DHNL. Residues 739–849 are disordered; that stretch reads ETPERSLRKS…AVATGTPRRR (111 aa). Composition is skewed to low complexity over residues 747 to 782 and 791 to 823; these read KSSS…SAST and PAAL…STPS.

The protein belongs to the villin/gelsolin family. Expressed in roots, young leaves, and inflorescences, mostly in the vasculature of roots, leaves, and filaments of the anthers. Also detected in guard cells.

It is found in the cytoplasm. Its subcellular location is the cytoskeleton. Ca(2+)-independent actin-binding protein. Binds actin microfilaments (MFs). Involved in actin filament bundling, severing and capping. Caps the barbed end of actin filaments and protects them from disassembly. Promotes VLN3-mediated MF severing. This chain is Villin-1, found in Oryza sativa subsp. japonica (Rice).